The primary structure comprises 422 residues: FAD-dependent monooxygenase ptmM (422 aa).

Residues 8–24 (VIIVGGSIAGLTLAHCL) form a helical membrane-spanning segment. Glu-35, Gly-49, Arg-108, Asp-308, and Ala-321 together coordinate FAD.

The protein belongs to the paxM FAD-dependent monooxygenase family. The cofactor is FAD.

The protein localises to the membrane. It participates in secondary metabolite biosynthesis. In terms of biological role, FAD-dependent monooxygenase; part of the gene cluster that mediates the biosynthesis of the indole diterpenes penitrems. The geranylgeranyl diphosphate (GGPP) synthase ptmG catalyzes the first step in penitrem biosynthesis via conversion of farnesyl pyrophosphate and isopentyl pyrophosphate into geranylgeranyl pyrophosphate (GGPP). Condensation of indole-3-glycerol phosphate with GGPP by the prenyl transferase ptmC then forms 3-geranylgeranylindole (3-GGI). Epoxidation by the FAD-dependent monooxygenase ptmM leads to a epoxidized-GGI that is substrate of the terpene cyclase ptmB for cyclization to yield paspaline. Paspaline is subsequently converted to 13-desoxypaxilline by the cytochrome P450 monooxygenase ptmP, the latter being then converted to paxilline by the cytochrome P450 monooxygenase ptmQ. Paxilline is converted to beta-paxitriol via C-10 ketoreduction by the short-chain dehydrogenase ptmH which can be monoprenylated at the C-20 by the indole diterpene prenyltransferase ptmD. A two-step elimination (acetylation and elimination) process performed by the O-acetyltransferase ptmV and ptmI leads to the production of the prenylated form of penijanthine. The FAD-linked oxidoreductase ptmO then converts the prenylated form of penijanthine into PC-M5 which is in turn transformed into PC-M4 by the aromatic dimethylallyltransferase ptmE. Five sequential oxidative transformations performed by the cytochrome P450 monooxygenases ptmK, ptmU, ptmL, ptmN and ptmJ yield the various penitrem compounds. PtmK, ptmU and ptmM are involved in the formation of the key bicyclic ring of penitrem C via the formation of the intermediates secopenitrem D and penitrem D. PtmL catalyzes the epoxidation of penitrem D and C to yield penitrem B and F, respectively. PtmJ catalyzes the last benzylic hydroxylation to convert penitrem B to prenitrem E and penitrem F to penitrem A. The protein is FAD-dependent monooxygenase ptmM of Penicillium ochrochloron.